The primary structure comprises 64 residues: Large ribosomal subunit protein bL33 (64 aa).

This sequence belongs to the bacterial ribosomal protein bL33 family.

The chain is Large ribosomal subunit protein bL33 from Picosynechococcus sp. (strain ATCC 27264 / PCC 7002 / PR-6) (Agmenellum quadruplicatum).